We begin with the raw amino-acid sequence, 221 residues long: Alpha-ketoglutarate-dependent dioxygenase alkB homolog 7, mitochondrial (221 aa).

Residues 1–23 constitute a mitochondrion transit peptide; it reads MAGGGQVVLRTLSQQGWVRGSGA. Positions 121 and 123 each coordinate Fe cation. 2-oxoglutarate is bound at residue tyrosine 165. Histidine 177 serves as a coordination point for Fe cation. Residues 197-199 and arginine 203 contribute to the 2-oxoglutarate site; that span reads RIS.

The protein belongs to the alkB family. Requires Fe(2+) as cofactor.

The protein localises to the mitochondrion matrix. May function as protein hydroxylase; can catalyze auto-hydroxylation at Leu-110 (in vitro), but this activity may be due to the absence of the true substrate. Required to induce programmed necrosis in response to DNA damage caused by cytotoxic alkylating agents. Acts by triggering the collapse of mitochondrial membrane potential and loss of mitochondrial function that leads to energy depletion and cell death. ALKBH7-mediated necrosis is probably required to prevent the accumulation of cells with DNA damage. Does not display DNA demethylase activity. Involved in fatty acid metabolism. This is Alpha-ketoglutarate-dependent dioxygenase alkB homolog 7, mitochondrial (ALKBH7) from Bos taurus (Bovine).